Here is a 216-residue protein sequence, read N- to C-terminus: Hydrogenase-4 component E (216 aa).

Over 1 to 3 (MTG) the chain is Periplasmic. Residues 4-24 (SMIVNNLAGLMMLTSLFVISV) traverse the membrane as a helical segment. The Cytoplasmic segment spans residues 25-38 (KSYRLSCGFYACQS). Transmembrane regions (helical) follow at residues 39-59 (LVLV…QLLI) and 60-80 (WSAS…TYAA). Residues 81–92 (RNIPQNIPEKAL) lie on the Cytoplasmic side of the membrane. Residues 93–113 (FGPAMMALLAALIVLLCAFVV) traverse the membrane as a helical segment. The Periplasmic segment spans residues 114–122 (QPVKLPMAT). A helical transmembrane segment spans residues 123-143 (GLKPALAVALGHFLLGLLCIV). At 144-150 (SQRNILR) the chain is on the cytoplasmic side. The helical transmembrane segment at 151 to 171 (QIFGYCLMENGSHLVLALLAW) threads the bilayer. Topologically, residues 172–175 (RAPE) are periplasmic. Residues 176-196 (LVEIGIATDAIFAVIVMVLLA) form a helical membrane-spanning segment. At 197 to 216 (RKIWRTHGTLDVNNLTALKG) the chain is on the cytoplasmic side.

The protein localises to the cell inner membrane. The sequence is that of Hydrogenase-4 component E (hyfE) from Escherichia coli O157:H7.